Consider the following 154-residue polypeptide: Small ribosomal subunit protein uS15 (154 aa).

Residues 1–11 are compositionally biased toward basic residues; that stretch reads MSRLHAHKRYH. The interval 1–24 is disordered; it reads MSRLHAHKRYHGQSGSKRPLRTTK.

Belongs to the universal ribosomal protein uS15 family. As to quaternary structure, part of the 30S ribosomal subunit.

The protein is Small ribosomal subunit protein uS15 of Nanoarchaeum equitans (strain Kin4-M).